The following is a 258-amino-acid chain: MTNFTVIIPARYASTRLPGKPLAEIAGKPMIAHVFEKAMQSGAKRVIVATDHEQVATVARGFGAEVCMTSETHQSGTERLAEVVEKLGIAEDEIIVNIQGDEPLIPPAIVRQVAENLAKYQVKMASLAVNITDPEELFNPNAVKVLTDHAGYVLYFSRAPIPWHRDQFASLPKEKSTRGQLVLSDHYLRHIGIYAYRAGFIKQYIQWQPSVLEQIESLEQLRVLWYGEKIHVELAREVPPVGVDTAEDLEKVRSILEK.

It belongs to the KdsB family.

The protein localises to the cytoplasm. The enzyme catalyses 3-deoxy-alpha-D-manno-oct-2-ulosonate + CTP = CMP-3-deoxy-beta-D-manno-octulosonate + diphosphate. The protein operates within nucleotide-sugar biosynthesis; CMP-3-deoxy-D-manno-octulosonate biosynthesis; CMP-3-deoxy-D-manno-octulosonate from 3-deoxy-D-manno-octulosonate and CTP: step 1/1. It functions in the pathway bacterial outer membrane biogenesis; lipopolysaccharide biosynthesis. In terms of biological role, activates KDO (a required 8-carbon sugar) for incorporation into bacterial lipopolysaccharide in Gram-negative bacteria. The sequence is that of 3-deoxy-manno-octulosonate cytidylyltransferase from Pasteurella multocida (strain Pm70).